The sequence spans 176 residues: MDLPGPIHDFLLVFLGSGLLVGGLGVVLLPNPIFSAFSLGFVLVCISLLYILSNSHFVAAAQLLIYVGAINVLIIFAVMFMNDSEYSTDFNLWTIGNGITSLVCTTILFLLMSTILDTSWYGVIWTTKLNQILEQDLISNSQQIGIHLSTDFFLPFELISIILLVALIGAISVARQ.

5 helical membrane passes run 10-30 (FLLV…VLLP), 32-52 (PIFS…LYIL), 61-81 (AQLL…VMFM), 92-112 (LWTI…FLLM), and 152-172 (FFLP…GAIS).

Belongs to the complex I subunit 6 family. In terms of assembly, NDH is composed of at least 16 different subunits, 5 of which are encoded in the nucleus.

It localises to the plastid. Its subcellular location is the chloroplast thylakoid membrane. The enzyme catalyses a plastoquinone + NADH + (n+1) H(+)(in) = a plastoquinol + NAD(+) + n H(+)(out). It catalyses the reaction a plastoquinone + NADPH + (n+1) H(+)(in) = a plastoquinol + NADP(+) + n H(+)(out). NDH shuttles electrons from NAD(P)H:plastoquinone, via FMN and iron-sulfur (Fe-S) centers, to quinones in the photosynthetic chain and possibly in a chloroplast respiratory chain. The immediate electron acceptor for the enzyme in this species is believed to be plastoquinone. Couples the redox reaction to proton translocation, and thus conserves the redox energy in a proton gradient. In Arabidopsis thaliana (Mouse-ear cress), this protein is NAD(P)H-quinone oxidoreductase subunit 6, chloroplastic (ndhG).